The primary structure comprises 331 residues: Type 2 lactosamine alpha-2,3-sialyltransferase (331 aa).

Over 1 to 4 the chain is Cytoplasmic; it reads MRGY. Residues 5-25 form a helical; Signal-anchor for type II membrane protein membrane-spanning segment; the sequence is LVAIFLSAVFLYYVLHCILWG. The Lumenal portion of the chain corresponds to 26–331; sequence TNVYWVAPVE…KNLVINLTQD (306 aa). N-linked (GlcNAc...) asparagine glycosylation is found at Asn129, Asn181, Asn282, Asn295, Asn308, and Asn327.

Belongs to the glycosyltransferase 29 family. Ubiquitous.

It localises to the golgi apparatus membrane. It carries out the reaction a neolactoside nLc4Cer(d18:1(4E)) + CMP-N-acetyl-beta-neuraminate = a neolactoside IV(3)-alpha-NeuAc-nLc4Cer(d18:1(4E)) + CMP + H(+). The enzyme catalyses a beta-D-galactosyl-(1-&gt;4)-N-acetyl-beta-D-glucosaminyl derivative + CMP-N-acetyl-beta-neuraminate = an N-acetyl-alpha-neuraminyl-(2-&gt;3)-beta-D-galactosyl-(1-&gt;4)-N-acetyl-beta-D-glucosaminyl derivative + CMP + H(+). The catalysed reaction is a neolactoside nLc6Cer(d18:1(4E)) + CMP-N-acetyl-beta-neuraminate = a neolactoside VI(3)-alpha-NeuNAc-nLc6Cer(d18:1(4E)) + CMP + H(+). Its function is as follows. Transfers the sialyl residue from CMP-N-acetyl-beta-neuraminate to the terminal galactose residue on sugar chains of glycoproteins and glycolipids. It's alpha-2,3-sialyltransferase activity is specific toward type II glycan chains (Galbeta1-4GlcNAc) on glycoproteins and glycolipids such as neolactosides nLc4Cer and nLc6Cer, whose sialyl-products serve as precursors for the Lewis X antigen. Critically involved in the synthesis of functional selectin ligands needed for neutrophil recruitment during inflammation and lymphocyte homing to the lymph nodes. The protein is Type 2 lactosamine alpha-2,3-sialyltransferase (ST3GAL6) of Homo sapiens (Human).